A 503-amino-acid polypeptide reads, in one-letter code: 4-trimethylaminobutyraldehyde dehydrogenase (503 aa).

Residues Lys189 and 241-245 (GSVPT) contribute to the NAD(+) site. The Proton acceptor role is filled by Glu263. Cys297 functions as the Nucleophile in the catalytic mechanism. NAD(+) is bound at residue Glu400.

This sequence belongs to the aldehyde dehydrogenase family. Homotetramer.

It is found in the cytoplasm. The protein resides in the cytosol. The catalysed reaction is 4-(trimethylamino)butanal + NAD(+) + H2O = 4-(trimethylamino)butanoate + NADH + 2 H(+). The enzyme catalyses an aldehyde + NAD(+) + H2O = a carboxylate + NADH + 2 H(+). It functions in the pathway amine and polyamine biosynthesis; carnitine biosynthesis. Functionally, converts gamma-trimethylaminobutyraldehyde into gamma-butyrobetaine with high efficiency (in vitro). Can catalyze the irreversible oxidation of a broad range of aldehydes to the corresponding acids in an NAD-dependent reaction, but with low efficiency. The polypeptide is 4-trimethylaminobutyraldehyde dehydrogenase (aldh9A1) (Gadus morhua subsp. callarias (Baltic cod)).